Here is a 316-residue protein sequence, read N- to C-terminus: uncharacterized protein (316 aa).

Helical transmembrane passes span 74-94 (IPVLGLLTVLPLGLFIFGMAI), 99-119 (WPYAALLVFLLFLFTLLIFLG), 166-186 (MAGCAVPFFAGVGTLLGTVLG), and 188-208 (VEGFVGAVPGAAIGAMAGYIF).

The protein resides in the cell membrane. This is an uncharacterized protein from Synechocystis sp. (strain ATCC 27184 / PCC 6803 / Kazusa).